The primary structure comprises 315 residues: Zinc finger CCCH domain-containing protein 23 (315 aa).

A disordered region spans residues 1 to 21; that stretch reads MMIGENKNRPHPTIHIPQWDQ. C3H1-type zinc fingers lie at residues 131 to 157 and 165 to 189; these read YSGT…HGVF and RYRT…HTTE.

The protein is Zinc finger CCCH domain-containing protein 23 of Arabidopsis thaliana (Mouse-ear cress).